A 77-amino-acid polypeptide reads, in one-letter code: uncharacterized protein (77 aa).

This is an uncharacterized protein from Plasmodium falciparum (isolate fcm17 / Senegal).